The primary structure comprises 251 residues: Ribonuclease 3 (251 aa).

Residues 3–125 (LATLETRLGH…LFGAVFLDAG (123 aa)) enclose the RNase III domain. Glutamate 38 contacts Mg(2+). Aspartate 42 is a catalytic residue. Mg(2+) is bound by residues aspartate 111 and glutamate 114. Residue glutamate 114 is part of the active site. The DRBM domain occupies 152-222 (DAKTLLQEFL…AKLALEAALV (71 aa)).

The protein belongs to the ribonuclease III family. As to quaternary structure, homodimer. It depends on Mg(2+) as a cofactor.

It localises to the cytoplasm. It carries out the reaction Endonucleolytic cleavage to 5'-phosphomonoester.. Digests double-stranded RNA. Involved in the processing of primary rRNA transcript to yield the immediate precursors to the large and small rRNAs (23S and 16S). Processes some mRNAs, and tRNAs when they are encoded in the rRNA operon. Processes pre-crRNA and tracrRNA of type II CRISPR loci if present in the organism. This is Ribonuclease 3 from Bordetella avium (strain 197N).